The primary structure comprises 304 residues: Mitochondrial glycine transporter (304 aa).

Solcar repeat units follow at residues 3–82 (GKSK…VREA), 106–186 (ENLI…LKVA), and 209–293 (SSAM…LVKR). 6 helical membrane passes run 9 to 34 (IYAG…TRVQ), 57 to 83 (GTLP…REAV), 108 to 133 (LISG…VRYE), 161 to 184 (GWAA…EQLK), 213 to 239 (INSV…KTRM), and 268 to 286 (GLAL…SWCI).

It belongs to the mitochondrial carrier (TC 2.A.29) family. SLC25A38 subfamily.

The protein localises to the mitochondrion inner membrane. It carries out the reaction glycine(in) = glycine(out). Functionally, mitochondrial glycine transporter that imports glycine into the mitochondrial matrix. Plays an important role in providing glycine for the first enzymatic step in heme biosynthesis, the condensation of glycine with succinyl-CoA to produce 5-aminolevulinate (ALA) in the mitochondrial matrix. The protein is Mitochondrial glycine transporter of Yarrowia lipolytica (strain CLIB 122 / E 150) (Yeast).